We begin with the raw amino-acid sequence, 168 residues long: Small ribosomal subunit protein uS4 (168 aa).

In terms of domain architecture, S4 RNA-binding spans 103 to 167 (RRLQTIVYKK…SPFKKSIEEK (65 aa)).

Belongs to the universal ribosomal protein uS4 family. In terms of assembly, part of the 30S ribosomal subunit. Contacts protein S5. The interaction surface between S4 and S5 is involved in control of translational fidelity.

In terms of biological role, one of the primary rRNA binding proteins, it binds directly to 16S rRNA where it nucleates assembly of the body of the 30S subunit. Functionally, with S5 and S12 plays an important role in translational accuracy. The protein is Small ribosomal subunit protein uS4 of Staphylothermus marinus (strain ATCC 43588 / DSM 3639 / JCM 9404 / F1).